A 1046-amino-acid polypeptide reads, in one-letter code: MFSFTEAKSKISLWTRSAAPLNNVYLSYSCRCGLGKRKLAGGCCSAPYITCYDSADFRRVQYLYFCLTRYCCLYFFLLLLADWFYKKSSIFFETEFSRGFRTWRKIVKLLYILPKFEMESIMSRGIPSGILEEKAIQFKRAKEGNKPLKDEIPKPEDMYVSHTSKWNVLRKMSQKTVDLSKAAAGMGFINKHMLTGNILAQPTTVLDIPVTKDKTLAMASDFIRKENLKTSAIHIGAIEIIIQSFASPESDLMGGFLLVDSLHTDTANAIRSIFVAPMRGGRPVRVVTFPNTLAPVSCDLNNRFKLICSLPNCDIVQGSQVAEVSVNVAGCATSIEKSHTPSQLYTEEFEKEGAVVVEYLGRQTYCAQPSNLPTEEKLRSLKFDFHVEQPSVLKLSNSCNAHFVKGESLKYSISGKEAENHAVHATVVSREGASAAPKQYDPILGRVLDPRNGNVAFPQMEQNLFALSLDDTSSVRGSLLDTKFAQTRVLLSKAMAGGDVLLDEYLYDVVNGQDFRATVAFLRTHVITGKIKVTATTNISDNSGCCLMLAINSGVRGKYSTDVYTICSQDSMTWNPGCKKNFSFTFNPNPCGDSWSAEMISRSRVRMTVICVSGWTLSPTTDVIAKLDWSIVNEKCEPTIYHLADCQNWLPLNRWMGKLTFPQGVTSEVRRMPLSIGGGAGATQAFLANMPNSWISMWRYFRGELHFEVTKMSSPYIKATVTFLIAFGNLSDAFGFYESFPHRIVQFAEVEEKCTLVFSQQEFVTAWSTQVNPRTTLEADGCPYLYAIIHDSTTGTISGDFNLGVKLVGIKDFCGIGSNPGIDGSRLLGAIAQGPVCAEASDVYSPCMIASTPPAPFSDVTAVTFDLINGKITPVGDDNWNTHIYNPPIMNVLRTAAWKSGTIHVQLNVRGAGVKRADWDGQVFVYLRQSMNPESYDARTFVISQPGSAMLNFSFDIIGPNSGFEFAESPWANQTTWYLECVATNPRQIQQFEVNMRFDPNFRVAGNILMPPFPLSTETPPLLKFRFRDIERSKRSVMVGHTATAA.

A hydrophobic region spans residues 62–84; sequence YLYFCLTRYCCLYFFLLLLADWF. Residues 409–415 form an involved in tubule formation by the movement protein region; it reads LKYSISG. Position 460 is an N-acetylmethionine; by host (Met-460).

As to quaternary structure, interacts with the large capsid protein. In terms of assembly, interacts with the mature small capsid protein. Homomultimer; assembles as pentons. Interacts with the movement protein (via C-terminus). Interacts (via C-terminus) with the large capsid protein. Specific enzymatic cleavages by picornain 3C-like protease in vivo yield mature proteins. In terms of processing, the C-terminal 24 amino acids of the small capsid protein are specifically cleaved by the RNA1 encoded picornain 3C-like protease during maturation. Post-translationally, not glycosylated.

It is found in the host nucleus. The protein localises to the host cell junction. Its subcellular location is the host plasmodesma. It localises to the virion. Its function is as follows. Responsible for viral RNA2 accumulation. May function by recruiting the RNA1-encoded polyprotein that contains the replication protein to RNA2 and enable its replication. In terms of biological role, transports the viral genome to neighboring plant cells directly through plasmosdesmata, without any budding. The movement protein allows efficient cell to cell propagation, by bypassing the host cell wall barrier. Acts by forming a tubular structure at the host plasmodesmata, enlarging it enough to allow free passage of virion capsids. Binds to GTP and to single-stranded RNA and single-stranded DNA in a non-sequence-specific manner. Functionally, together with the mature small capsid protein, forms an icosahedral capsid (T=3) enclosing the viral positive strand RNA genome, with a diameter of approximately 300 Angstroms. The capsid is formed from 60 copies each of the large and the small capsid protein. The large capsid protein interacts with the viral RNA. Together with the large capsid protein, forms an icosahedral capsid (T=3) enclosing the viral positive strand RNA genome, with a diameter of approximately 300 Angstroms. The capsid is formed from 60 copies each of the large and the small capsid protein. The mature small capsid protein forms the turrets at the fivefold axes of the viral particle. Its function is as follows. The cleavable C-terminus of small capsid protein seems to be involved in viral assembly and RNA packaging. After virus assembly, these amino acids are cleaved off during the normal maturation of the virus. Also seems to act as suppressor of post-transcriptional gene silencing (PTGS), a mechanism of plant viral defense that limits the accumulation of viral RNAs. In terms of biological role, acts as a suppressor of RNA-mediated gene silencing, also known as post-transcriptional gene silencing (PTGS), a mechanism of plant viral defense that limits the accumulation of viral RNAs. This is RNA2 polyprotein from Cajanus cajan (Pigeon pea).